A 397-amino-acid chain; its full sequence is Penicillopepsin-1 (397 aa).

The first 20 residues, 1 to 20, serve as a signal peptide directing secretion; the sequence is MVVFSQVTVALTCFSAIASA. The propeptide at 21 to 71 is activation peptide; sequence AAVRQEPPQGFTVNQVQKAVPGTRTVNLPGLYANALVKYGATVPATVHAAA. The region spanning 87–394 is the Peptidase A1 domain; sequence YLTPVTIGSS…DSEGPRLGFA (308 aa). Active-site residues include Asp103 and Asp285. Residue Asn311 is glycosylated (N-linked (GlcNAc...) asparagine). The cysteines at positions 322 and 357 are disulfide-linked.

Belongs to the peptidase A1 family. In terms of assembly, monomer.

Its subcellular location is the secreted. It carries out the reaction Hydrolysis of proteins with broad specificity similar to that of pepsin A, preferring hydrophobic residues at P1 and P1', but also cleaving 20-Gly-|-Glu-21 in the B chain of insulin. Clots milk, and activates trypsinogen.. Secreted aspartic endopeptidase that allows assimilation of proteinaceous substrates. The scissile peptide bond is attacked by a nucleophilic water molecule activated by two aspartic residues in the active site. Shows a broad primary substrate specificity. Favors hydrophobic residues at the P1 and P1' positions, but can also activate trypsinogen and hydrolyze the B chain of insulin between positions 'Gly-20' and 'Glu-21'. The polypeptide is Penicillopepsin-1 (Penicillium roqueforti).